A 126-amino-acid polypeptide reads, in one-letter code: Chemocyanin (126 aa).

The signal sequence occupies residues 1–30 (MAQGSGSAERALVLGVVLVFLVFNCEVAES). Residues 31–126 (VVYTVGDGGG…GGLKIAVTAA (96 aa)) enclose the Phytocyanin domain. Histidine 69, cysteine 109, and histidine 114 together coordinate Cu cation. Cysteine 82 and cysteine 115 form a disulfide bridge.

In terms of tissue distribution, strongly expressed in stigma and style and to a lesser extent in leaves, ovary and petals. Not detected in pollen tubes, mature anthers or roots.

Diffusible chemotropic factor that induces pollen tube chemotropism. This chain is Chemocyanin, found in Lilium longiflorum (Trumpet lily).